A 194-amino-acid chain; its full sequence is Large ribosomal subunit protein bL9 (194 aa).

The segment at 148–194 (QDEAERQARGENVINSQFEEDRAAEAEAAQDMAEGGAGSFEGDHYEA) is disordered.

This sequence belongs to the bacterial ribosomal protein bL9 family.

In terms of biological role, binds to the 23S rRNA. In Caulobacter vibrioides (strain ATCC 19089 / CIP 103742 / CB 15) (Caulobacter crescentus), this protein is Large ribosomal subunit protein bL9.